A 207-amino-acid polypeptide reads, in one-letter code: Methylated-DNA--protein-cysteine methyltransferase (207 aa).

DNA-binding residues include Tyr123 and Arg137. The active-site Nucleophile; methyl group acceptor is Cys154. Ser160 contributes to the DNA binding site.

Belongs to the MGMT family.

It is found in the nucleus. The enzyme catalyses a 6-O-methyl-2'-deoxyguanosine in DNA + L-cysteinyl-[protein] = S-methyl-L-cysteinyl-[protein] + a 2'-deoxyguanosine in DNA. The catalysed reaction is a 4-O-methyl-thymidine in DNA + L-cysteinyl-[protein] = a thymidine in DNA + S-methyl-L-cysteinyl-[protein]. In terms of biological role, involved in the cellular defense against the biological effects of O6-methylguanine (O6-MeG) and O4-methylthymine (O4-MeT) in DNA. Repairs the methylated nucleobase in DNA by stoichiometrically transferring the methyl group to a cysteine residue in the enzyme. This is a suicide reaction: the enzyme is irreversibly inactivated. This is Methylated-DNA--protein-cysteine methyltransferase (MGT1) from Candida glabrata (strain ATCC 2001 / BCRC 20586 / JCM 3761 / NBRC 0622 / NRRL Y-65 / CBS 138) (Yeast).